A 62-amino-acid chain; its full sequence is Large ribosomal subunit protein uL30 (62 aa).

It belongs to the universal ribosomal protein uL30 family. In terms of assembly, part of the 50S ribosomal subunit.

The chain is Large ribosomal subunit protein uL30 from Ruegeria pomeroyi (strain ATCC 700808 / DSM 15171 / DSS-3) (Silicibacter pomeroyi).